Reading from the N-terminus, the 555-residue chain is MEWLYNLFLEHSALQAVVVLSLISAIGLGLGRVHFWGVSLGVTFVFFAGILAGHFGLSVDPQMLNYAESFGLVIFVYSLGLQVGPGFFSSFRKGGVTLNMLALAVVLLGTLLTVVASYATGVSLPDMVGILCGATTNTPALGAAQQTLKQMGIESSTPALGCAVAYPMGVIGVILAVLLIRKFLVHKEDLEIKEKDDANKTFIAAFQVHNPAIFNKSIKDIAQMSYPKFVISRLWRDGHVSIPTSDKVLKEGDRLLVITAEKNVLALTVLFGEQEENTDWNKEDIDWNAIDSELISQRIVVTRPELNGKKLGSLRLRNHYGINISRVYRSGVQLLATPELILQLGDRLTVVGEAAAIQNVEKVLGNAVKSLKEPNLVVIFIGIVLGLALGAIPFSIPGISTPVKLGLAGGPIIVGILLGTFGPRIHMITYTTRSANLMLRALGLSMYLACLGLDAGAHFFDTVFRPEGLLWIALGAGLTIIPTVLVGFVAFKIMKIDFGSVSGMLCGSMANPMALNYANDTIPGDNPSVAYATVYPLCMFLRVIIAQVLLMFLLG.

Helical transmembrane passes span 13 to 30 (ALQAVVVLSLISAIGLGL), 35 to 57 (FWGVSLGVTFVFFAGILAGHFGL), 72 to 91 (LVIFVYSLGLQVGPGFFSSF), 98 to 120 (LNMLALAVVLLGTLLTVVASYAT), and 157 to 179 (TPALGCAVAYPMGVIGVILAVLL). 2 RCK C-terminal domains span residues 188 to 273 (EDLE…LFGE) and 282 to 366 (KEDI…VLGN). Helical transmembrane passes span 376-398 (LVVIFIGIVLGLALGAIPFSIPG), 408-430 (AGGPIIVGILLGTFGPRIHMITY), 437-459 (LMLRALGLSMYLACLGLDAGAHF), 469-491 (LLWIALGAGLTIIPTVLVGFVAF), 498-517 (FGSVSGMLCGSMANPMALNY), and 532-554 (ATVYPLCMFLRVIIAQVLLMFLL).

The protein belongs to the AAE transporter (TC 2.A.81) family.

It localises to the cell membrane. This is an uncharacterized protein from Bacteroides thetaiotaomicron (strain ATCC 29148 / DSM 2079 / JCM 5827 / CCUG 10774 / NCTC 10582 / VPI-5482 / E50).